The primary structure comprises 594 residues: Protein REBELOTE (594 aa).

Positions 1–13 are enriched in basic residues; it reads MGKLGKKARKFAK. Disordered stretches follow at residues 1–21 and 35–58; these read MGKLGKKARKFAKKNLQSVEK and AKRNERHQAGDKQEKKVEQQPKKR. 3 short sequence motifs (nuclear localization signal) span residues 8-15, 35-42, and 512-519; these read ARKFAKKN, AKRNERHQ, and LKKFHERS. Residues 36–58 show a composition bias toward basic and acidic residues; it reads KRNERHQAGDKQEKKVEQQPKKR.

It belongs to the NOC2 family. As to quaternary structure, interacts with SWA2, NOC2 and NOC3 in both the nucleolus and nucleoplasm. Binds to ENAP1 and OBE1. In terms of tissue distribution, expressed at low levels in roots, shoots, leaves, stems, inflorescences, flowers and siliques, with highest levels dividing tissues.

It is found in the nucleus. The protein resides in the nucleolus. The protein localises to the nucleoplasm. Its function is as follows. Collaboratively with CYP40/SQN and ULT1, influences floral meristem (FM) determinacy in an AGAMOUS and SUPERMAN-dependent manner, thus contributing to the floral developmental homeostasis. In Arabidopsis thaliana (Mouse-ear cress), this protein is Protein REBELOTE.